The primary structure comprises 1197 residues: Probable DNA polymerase (1197 aa).

This sequence belongs to the DNA polymerase type-B family.

The protein localises to the mitochondrion. It carries out the reaction DNA(n) + a 2'-deoxyribonucleoside 5'-triphosphate = DNA(n+1) + diphosphate. The chain is Probable DNA polymerase from Podospora anserina (Pleurage anserina).